Here is a 275-residue protein sequence, read N- to C-terminus: Ribosomal RNA small subunit methyltransferase A (275 aa).

N28, L30, G55, E77, D103, and N123 together coordinate S-adenosyl-L-methionine.

It belongs to the class I-like SAM-binding methyltransferase superfamily. rRNA adenine N(6)-methyltransferase family. RsmA subfamily.

It is found in the cytoplasm. It catalyses the reaction adenosine(1518)/adenosine(1519) in 16S rRNA + 4 S-adenosyl-L-methionine = N(6)-dimethyladenosine(1518)/N(6)-dimethyladenosine(1519) in 16S rRNA + 4 S-adenosyl-L-homocysteine + 4 H(+). In terms of biological role, specifically dimethylates two adjacent adenosines (A1518 and A1519) in the loop of a conserved hairpin near the 3'-end of 16S rRNA in the 30S particle. May play a critical role in biogenesis of 30S subunits. The chain is Ribosomal RNA small subunit methyltransferase A from Rhizobium johnstonii (strain DSM 114642 / LMG 32736 / 3841) (Rhizobium leguminosarum bv. viciae).